We begin with the raw amino-acid sequence, 107 residues long: N(4)-acetylcytidine amidohydrolase (107 aa).

Residues 9-105 (TFFEFLTPLI…KLFVIEYELI (97 aa)) enclose the ASCH domain. Lys-23 acts as the Proton acceptor in catalysis. The active-site Nucleophile is the Thr-26. Glu-76 (proton donor) is an active-site residue.

Belongs to the N(4)-acetylcytidine amidohydrolase family.

It carries out the reaction N(4)-acetylcytidine + H2O = cytidine + acetate + H(+). The catalysed reaction is N(4)-acetyl-2'-deoxycytidine + H2O = 2'-deoxycytidine + acetate + H(+). It catalyses the reaction N(4)-acetylcytosine + H2O = cytosine + acetate + H(+). Functionally, catalyzes the hydrolysis of N(4)-acetylcytidine (ac4C). The protein is N(4)-acetylcytidine amidohydrolase of Vibrio parahaemolyticus serotype O3:K6 (strain RIMD 2210633).